We begin with the raw amino-acid sequence, 245 residues long: Pyridoxine 5'-phosphate synthase (245 aa).

N7 lines the 3-amino-2-oxopropyl phosphate pocket. A 1-deoxy-D-xylulose 5-phosphate-binding site is contributed by 9–10 (DH). 3-amino-2-oxopropyl phosphate is bound at residue R18. Catalysis depends on H43, which acts as the Proton acceptor. 2 residues coordinate 1-deoxy-D-xylulose 5-phosphate: R45 and H50. Catalysis depends on E70, which acts as the Proton acceptor. T100 contacts 1-deoxy-D-xylulose 5-phosphate. The Proton donor role is filled by H190. 3-amino-2-oxopropyl phosphate is bound by residues G191 and 212-213 (GH).

This sequence belongs to the PNP synthase family. In terms of assembly, homooctamer; tetramer of dimers.

It localises to the cytoplasm. The catalysed reaction is 3-amino-2-oxopropyl phosphate + 1-deoxy-D-xylulose 5-phosphate = pyridoxine 5'-phosphate + phosphate + 2 H2O + H(+). Its pathway is cofactor biosynthesis; pyridoxine 5'-phosphate biosynthesis; pyridoxine 5'-phosphate from D-erythrose 4-phosphate: step 5/5. In terms of biological role, catalyzes the complicated ring closure reaction between the two acyclic compounds 1-deoxy-D-xylulose-5-phosphate (DXP) and 3-amino-2-oxopropyl phosphate (1-amino-acetone-3-phosphate or AAP) to form pyridoxine 5'-phosphate (PNP) and inorganic phosphate. The sequence is that of Pyridoxine 5'-phosphate synthase from Prochlorococcus marinus (strain MIT 9303).